The following is a 38-amino-acid chain: MTQPNPNKQIVELNRTSLFWGLLLIFVLAILFSNYFFN.

The helical transmembrane segment at 17-37 (SLFWGLLLIFVLAILFSNYFF) threads the bilayer.

Belongs to the PsbL family. As to quaternary structure, PSII is composed of 1 copy each of membrane proteins PsbA, PsbB, PsbC, PsbD, PsbE, PsbF, PsbH, PsbI, PsbJ, PsbK, PsbL, PsbM, PsbT, PsbX, PsbY, PsbZ, Psb30/Ycf12, at least 3 peripheral proteins of the oxygen-evolving complex and a large number of cofactors. It forms dimeric complexes.

The protein localises to the plastid. It localises to the chloroplast thylakoid membrane. In terms of biological role, one of the components of the core complex of photosystem II (PSII). PSII is a light-driven water:plastoquinone oxidoreductase that uses light energy to abstract electrons from H(2)O, generating O(2) and a proton gradient subsequently used for ATP formation. It consists of a core antenna complex that captures photons, and an electron transfer chain that converts photonic excitation into a charge separation. This subunit is found at the monomer-monomer interface and is required for correct PSII assembly and/or dimerization. This is Photosystem II reaction center protein L from Chara vulgaris (Common stonewort).